Consider the following 155-residue polypeptide: Putative pre-16S rRNA nuclease (155 aa).

Belongs to the YqgF nuclease family.

The protein resides in the cytoplasm. Its function is as follows. Could be a nuclease involved in processing of the 5'-end of pre-16S rRNA. The chain is Putative pre-16S rRNA nuclease from Paramagnetospirillum magneticum (strain ATCC 700264 / AMB-1) (Magnetospirillum magneticum).